The chain runs to 107 residues: UPF0102 protein Tlet_0667 (107 aa).

This sequence belongs to the UPF0102 family.

This is UPF0102 protein Tlet_0667 from Pseudothermotoga lettingae (strain ATCC BAA-301 / DSM 14385 / NBRC 107922 / TMO) (Thermotoga lettingae).